Consider the following 547-residue polypeptide: Inositol 1,4,5-trisphosphate receptor-interacting protein-like 1 (547 aa).

An N-terminal signal peptide occupies residues 1-16; the sequence is MAVISLLFLAVMYVVH. Over 17 to 96 the chain is Extracellular; the sequence is HPLMVSDRMD…PFQASGQDGG (80 aa). Positions 28–66 form a coiled coil; it reads DTLARSRQLEKRMSEEMRQLEIEFEERSRAAEEKQKAEN. The helical transmembrane segment at 97–117 threads the bilayer; it reads PLGWMLGNLWNAGLFCLFLIF. The Cytoplasmic portion of the chain corresponds to 118–547; the sequence is ELLRQNMQHE…LPCSPLAGGL (430 aa).

The protein belongs to the ITPRIP family.

The protein localises to the cell membrane. Functions as a ligand of CD3E, inhibiting TCR-CD3 complex signaling to regulate T cell activation. Induces stable CD3E-NCK1 binding, thereby preventing the CD3E-ZAP70 interaction and subsequently inhibiting the activation of the downstream ERK-NFkB signaling cascade and calcium influx. In Rattus norvegicus (Rat), this protein is Inositol 1,4,5-trisphosphate receptor-interacting protein-like 1 (Itpripl1).